We begin with the raw amino-acid sequence, 181 residues long: Phospholipase A2 inhibitor gamma subunit B (181 aa).

8 cysteine pairs are disulfide-bonded: cysteine 3–cysteine 27, cysteine 6–cysteine 13, cysteine 20–cysteine 48, cysteine 54–cysteine 75, cysteine 76–cysteine 81, cysteine 101–cysteine 126, cysteine 119–cysteine 146, and cysteine 152–cysteine 172.

The protein belongs to the CNF-like-inhibitor family. As to quaternary structure, heterotrimer of 2 subunits A and 1 subunit B. In terms of tissue distribution, expressed by the liver.

The protein localises to the secreted. Its function is as follows. Strongly inhibits its own venom PLA2 and all other PLA2s tested including Elapid, Crotalid and Viperid venom PLA2s, as well as honeybee PLA2s. The protein is Phospholipase A2 inhibitor gamma subunit B of Laticauda semifasciata (Black-banded sea krait).